We begin with the raw amino-acid sequence, 89 residues long: Small ribosomal subunit protein uS15 (89 aa).

The segment covering 1-21 has biased composition (basic and acidic residues); it reads MVMTAEDKAQVIGEHKKHDGD. Residues 1-24 are disordered; the sequence is MVMTAEDKAQVIGEHKKHDGDTGS.

Belongs to the universal ribosomal protein uS15 family. Part of the 30S ribosomal subunit. Forms a bridge to the 50S subunit in the 70S ribosome, contacting the 23S rRNA.

Functionally, one of the primary rRNA binding proteins, it binds directly to 16S rRNA where it helps nucleate assembly of the platform of the 30S subunit by binding and bridging several RNA helices of the 16S rRNA. In terms of biological role, forms an intersubunit bridge (bridge B4) with the 23S rRNA of the 50S subunit in the ribosome. This is Small ribosomal subunit protein uS15 from Solidesulfovibrio magneticus (strain ATCC 700980 / DSM 13731 / RS-1) (Desulfovibrio magneticus).